A 316-amino-acid chain; its full sequence is GMP reductase (316 aa).

Residue C175 is the Thioimidate intermediate of the active site. Residue 202 to 225 (VIADGGIVEHGDIAKALVCGATMV) coordinates NADP(+).

The protein belongs to the IMPDH/GMPR family. GuaC type 2 subfamily.

It catalyses the reaction IMP + NH4(+) + NADP(+) = GMP + NADPH + 2 H(+). In terms of biological role, catalyzes the irreversible NADPH-dependent deamination of GMP to IMP. It functions in the conversion of nucleobase, nucleoside and nucleotide derivatives of G to A nucleotides, and in maintaining the intracellular balance of A and G nucleotides. In Chromobacterium violaceum (strain ATCC 12472 / DSM 30191 / JCM 1249 / CCUG 213 / NBRC 12614 / NCIMB 9131 / NCTC 9757 / MK), this protein is GMP reductase.